A 352-amino-acid chain; its full sequence is Fatty acid desaturase (352 aa).

2 helical membrane passes run 28 to 48 and 55 to 75; these read SLIQ…LAYL and LLTL…FIIF. A Histidine box-1 motif is present at residues 76–80; sequence HDCCH. Residues 89–109 form a helical membrane-spanning segment; sequence YNHILGFLTGVLTLFPYLQWQ. A Histidine box-2 motif is present at residues 112–116; it reads HSIHH. Transmembrane regions (helical) follow at residues 151-171, 186-206, and 209-229; these read LYRN…LITN, TYLT…IFGW, and FLLV…WLFY. Positions 274-278 match the Histidine box-3 motif; that stretch reads HHVHH.

The protein belongs to the fatty acid desaturase type 1 family.

Its subcellular location is the cell membrane. The protein operates within lipid metabolism; fatty acid metabolism. In terms of biological role, catalyzes the introduction of a cis-double bond at the delta(5) position of existing saturated fatty acids attached to membrane phospholipids. It is not strictly specific for palmitic acid (C16) but can also accept C14 as well as C18 species to yield unsaturated fatty acids. This Bacillus subtilis (strain 168) protein is Fatty acid desaturase (des).